The following is an 834-amino-acid chain: MSYKPSSEIALRPGYGGLGKQITLKANFFQIISLPNETINQYHVIVGDGSRVPRKQSQLIWNSKEVKQYFGSSWMNSVYDGRSMCWSKGDIADGTIKVNIGSESHPREIEFSIQKSSKINLHTLSQFVNSKYSSDPQVLSSIMFLDLLLKKKPSETLFGFMHSFFTGENGVSLGGGVEAWKGFYQSIRPNQGFMSVNVDISSSAFWRNDSLLQILMEYTDCSNVRDLTRFDLKRLSRKFRFLKVTCQHRNNVGTDLANRVYSIEGFSSKSASDSFFVRRLNGEEQKISVAEYFLENHNVRLQYPNLPCILVKNGAMLPIEFCFVVKGQRYTAKLNSDQTANMIRFAVQRPFERVQQIDDFVHQMDWDTDPYLTQYGMKIQKKMLEVPARVLETPSIRYGGDCIERPVSGRWNLRGKRFLDPPRAPIRSWAVMCFTSTRRLPMRGIENFLQTYVQTLTSLGINFVMKKPPVLYADIRGSVEELCITLYKKAEQVGNAPPDYLFFILDKNSPEPYGSIKRVCNTMLGVPSQCAISKHILQSKPQYCANLGMKINVKVGGINCSLIPKSNPLGNVPTLILGGDVYHPGVGATGVSIASIVASVDLNGCKYTAVSRSQPRHQEVIEGMKDIVVYLLQGFRAMTKQQPQRIIYFRDGTSEGQFLSVINDELSQIKEACHSLSPKYNPKILVCTTQKRHHARFFIKNKSDGDRNGNPLPGTIIEKHVTHPYQYDFYLISHPSLQGVSVPVHYTVLHDEIQMPPDQFQTLCYNLCYVYARATSAVSLVPPVYYAHLVSNLARYQDVTADDTFVETSEASMDQEVKPLLALSSKLKTKMWYM.

In terms of domain architecture, PAZ spans 210–326; it reads SLLQILMEYT…LPIEFCFVVK (117 aa). The region spanning 500 to 799 is the Piwi domain; it reads YLFFILDKNS…VSNLARYQDV (300 aa).

Belongs to the argonaute family. Ago subfamily. As to quaternary structure, ago1, chp1 and tas3 interact to form the core of the RNA-induced transcriptional silencing (RITS) complex. The RITS complex interacts with the RDRC complex via interaction between ago1 and hrr1. Clr4 has a role in mediating this interaction. Component of the argonaute siRNA chaperone (ARC) complex composed of ago1, arb1 and arb2. Interacts with arb1.

It localises to the cytoplasm. Its subcellular location is the nucleus. The protein resides in the chromosome. It is found in the centromere. The protein localises to the telomere. In terms of biological role, required for G1 arrest and mating in response to nitrogen starvation. Ago1 regulation of cytokinesis and cell cycle checkpoints occurs downstream of dcr1. Required, indirectly, for regulated hyperphosphorylation of cdc2. Has a role in the RNA interference (RNAi) pathway which is important for heterochromatin formation, accurate chromosome segregation, centromere cohesion and telomere function during mitosis and meiosis. Required for silencing at the centromeres and for initiation of transcriptionally silent heterochromatin at the mating type locus. Promotes histone H3K9 methylation necessary for centromere function. Required for recruitment of swi6 and cohesin to an ectopic dg repeat. A member of the RNA-induced transcriptional silencing (RITS) complex which is involved in the biosynthesis of dsRNA from primer siRNAs provided by the RNA-directed RNA polymerase (RDRC) complex. Has ribonuclease H-like cleavage (slicing) activity towards target messages complementary to siRNA and can direct site-specific cleavage of RNA substrates via siRNA. Slicing activity is required for both post-transcriptional and transcriptional gene silencing as well as for histone H3 'Lys-10' methylation spreading, conversion of double-stranded siRNA to single-stranded siRNA and siRNA-dependent association of ago1 with chromatin. A member of the argonaute siRNA chaperone (ARC) complex which is required for histone H3K9 methylation, heterochromatin assembly and siRNA generation. The ARC complex contains mostly double-stranded siRNA. The sequence is that of Protein argonaute (ago1) from Schizosaccharomyces pombe (strain 972 / ATCC 24843) (Fission yeast).